The primary structure comprises 1666 residues: Probable clathrin heavy chain (1666 aa).

WD40-like repeat regions lie at residues 24-67 (SFGF…RPIS), 68-107 (ADSVILHPKKKIIALKAQRQLQVFDLEAKAKINSYVMNQD), 108-148 (VVYW…SSLN), 149-194 (GTQI…QPLE), 195-255 (SHAS…PEAV), 256-299 (NDFP…VSGE), and 300-328 (SIFVTTAHKSVNGLMAINRKGQVLSVSIN). Thr-392 bears the Phosphothreonine mark. The residue at position 393 (Ser-393) is a Phosphoserine. 7 CHCR repeats span residues 534-680 (MFNS…QIVV), 683-825 (ATRY…DEEL), 830-969 (LMSV…LLDQ), 975-1120 (VPES…IPDA), 1124-1265 (YLKA…FRLA), 1270-1415 (LNLI…MLLT), and 1418-1561 (LAAL…YECF).

It belongs to the clathrin heavy chain family. Clathrin triskelions, composed of 3 heavy chains and 3 light chains, are the basic subunits of the clathrin coat.

The protein resides in the cytoplasmic vesicle membrane. It localises to the membrane. Its subcellular location is the coated pit. In terms of biological role, clathrin is the major protein of the polyhedral coat of coated pits and vesicles. The sequence is that of Probable clathrin heavy chain (chc1) from Schizosaccharomyces pombe (strain 972 / ATCC 24843) (Fission yeast).